Consider the following 326-residue polypeptide: Acetyl-coenzyme A carboxylase carboxyl transferase subunit alpha (326 aa).

The CoA carboxyltransferase C-terminal domain occupies 46-300 (EIEARAAELR…KEALLRHLDE (255 aa)).

It belongs to the AccA family. As to quaternary structure, acetyl-CoA carboxylase is a heterohexamer composed of biotin carboxyl carrier protein (AccB), biotin carboxylase (AccC) and two subunits each of ACCase subunit alpha (AccA) and ACCase subunit beta (AccD).

It is found in the cytoplasm. It catalyses the reaction N(6)-carboxybiotinyl-L-lysyl-[protein] + acetyl-CoA = N(6)-biotinyl-L-lysyl-[protein] + malonyl-CoA. The protein operates within lipid metabolism; malonyl-CoA biosynthesis; malonyl-CoA from acetyl-CoA: step 1/1. Functionally, component of the acetyl coenzyme A carboxylase (ACC) complex. First, biotin carboxylase catalyzes the carboxylation of biotin on its carrier protein (BCCP) and then the CO(2) group is transferred by the carboxyltransferase to acetyl-CoA to form malonyl-CoA. In Gloeobacter violaceus (strain ATCC 29082 / PCC 7421), this protein is Acetyl-coenzyme A carboxylase carboxyl transferase subunit alpha.